The primary structure comprises 189 residues: NADH-quinone oxidoreductase subunit B (189 aa).

[4Fe-4S] cluster is bound by residues cysteine 39, cysteine 40, cysteine 104, and cysteine 135.

Belongs to the complex I 20 kDa subunit family. As to quaternary structure, NDH-1 is composed of 14 different subunits. Subunits NuoB, C, D, E, F, and G constitute the peripheral sector of the complex. [4Fe-4S] cluster serves as cofactor.

It localises to the cell inner membrane. It carries out the reaction a quinone + NADH + 5 H(+)(in) = a quinol + NAD(+) + 4 H(+)(out). Functionally, NDH-1 shuttles electrons from NADH, via FMN and iron-sulfur (Fe-S) centers, to quinones in the respiratory chain. The immediate electron acceptor for the enzyme in this species is believed to be a menaquinone. Couples the redox reaction to proton translocation (for every two electrons transferred, four hydrogen ions are translocated across the cytoplasmic membrane), and thus conserves the redox energy in a proton gradient. The chain is NADH-quinone oxidoreductase subunit B from Chlorobium phaeovibrioides (strain DSM 265 / 1930) (Prosthecochloris vibrioformis (strain DSM 265)).